Reading from the N-terminus, the 134-residue chain is Small ribosomal subunit protein uS8c (134 aa).

This sequence belongs to the universal ribosomal protein uS8 family. Part of the 30S ribosomal subunit.

Its subcellular location is the plastid. It localises to the chloroplast. Its function is as follows. One of the primary rRNA binding proteins, it binds directly to 16S rRNA central domain where it helps coordinate assembly of the platform of the 30S subunit. The chain is Small ribosomal subunit protein uS8c (rps8) from Lotus japonicus (Lotus corniculatus var. japonicus).